Reading from the N-terminus, the 183-residue chain is Ribosome rescue factor SmrB (183 aa).

The region spanning 98–173 is the Smr domain; that stretch reads LDLHGLTQQQ…GDAALLVLIE (76 aa).

It belongs to the SmrB family. As to quaternary structure, associates with collided ribosomes, but not with correctly translating polysomes.

Functionally, acts as a ribosome collision sensor. Detects stalled/collided disomes (pairs of ribosomes where the leading ribosome is stalled and a second ribosome has collided with it) and endonucleolytically cleaves mRNA at the 5' boundary of the stalled ribosome. Stalled/collided disomes form a new interface (primarily via the 30S subunits) that binds SmrB. Cleaved mRNA becomes available for tmRNA ligation, leading to ribosomal subunit dissociation and rescue of stalled ribosomes. This Klebsiella pneumoniae (strain 342) protein is Ribosome rescue factor SmrB.